Here is a 256-residue protein sequence, read N- to C-terminus: Protein US2 homolog (256 aa).

3 disordered regions span residues Thr100 to Pro120, Ser167 to Pro186, and Val236 to Ser256. Residues Ser167–Arg180 are compositionally biased toward low complexity. Residues Asn245–Ser256 are compositionally biased toward basic and acidic residues.

The protein belongs to the herpesviridae US2 family.

This Sus scrofa (Pig) protein is Protein US2 homolog (28K).